The sequence spans 244 residues: Carbonyl reductase [NADPH] 2 (244 aa).

11–39 (LVTGAGKGIGRDTVKALHVSGARVVAVTR) contacts NADP(+). Residue S136 coordinates substrate. Y149 serves as the catalytic Proton acceptor. Position 176 is a phosphoserine (S176).

The protein belongs to the short-chain dehydrogenases/reductases (SDR) family. In terms of assembly, homotetramer. Lung (ciliated cells, non-ciliated bronchiolar cells and type-II alveolar pneumocytes). Low expression in all extrapulmonary tissues, including adipose tissue.

The protein localises to the mitochondrion matrix. It catalyses the reaction a secondary alcohol + NADP(+) = a ketone + NADPH + H(+). Allosteric enzyme exhibiting negative cooperativity. Activated 2-5 fold by fatty acids. May function in the pulmonary metabolism of endogenous carbonyl compounds, such as aliphatic aldehydes and ketones derived from lipid peroxidation, 3-ketosteroids and fatty aldehydes, as well as in xenobiotic metabolism. The protein is Carbonyl reductase [NADPH] 2 (CBR2) of Sus scrofa (Pig).